Here is a 2151-residue protein sequence, read N- to C-terminus: Protein PRR14L (2151 aa).

Composition is skewed to basic and acidic residues over residues 112–123 (KRSESMEPKVFR) and 134–154 (EPSE…EEKT). Disordered stretches follow at residues 112 to 160 (KRSE…SQED), 206 to 225 (GTKT…KDLS), and 314 to 350 (QLHG…SDLS). A Phosphoserine modification is found at S157. Over residues 322 to 350 (QPSSTHDSPTATSPLKENSEVSCFTSDLS) the composition is skewed to polar residues. Residues S582 and S945 each carry the phosphoserine modification. Positions 974 to 1017 (SNQNRPDECKSEGQSAKEMLSSDQRETVTEPHGEVNHNQKDLLV) are disordered. The segment covering 996–1013 (DQRETVTEPHGEVNHNQK) has biased composition (basic and acidic residues). At S1029 the chain carries Phosphoserine. A compositionally biased stretch (basic and acidic residues) spans 1091 to 1103 (DSRSTLSRRELDA). 4 disordered regions span residues 1091–1115 (DSRS…DSDF), 1178–1226 (DSHY…SCHD), 1782–1802 (TGVH…PLQD), and 1986–2012 (AACP…KVSQ). Over residues 1178 to 1187 (DSHYGQQDKG) the composition is skewed to polar residues. Basic and acidic residues predominate over residues 1188-1201 (TSLRETQEMTEGSR).

The polypeptide is Protein PRR14L (PRR14L) (Homo sapiens (Human)).